The chain runs to 1500 residues: Copper-transporting ATPase 1 (1500 aa).

Residues 1–653 (MDPSMGVNSV…KREIRQWRRS (653 aa)) lie on the Cytoplasmic side of the membrane. HMA domains follow at residues 8 to 74 (NSVT…FDAV) and 85 to 151 (TDTL…LDTG). Cu(+)-binding residues include Thr18, Cys19, and Cys22. Phosphothreonine is present on Thr152. Positions 171 to 237 (VVLKMKVEGM…QIEAMGFPAF (67 aa)) constitute an HMA 3 domain. Positions 182 and 185 each coordinate Cu(+). A Phosphoserine modification is found at Ser270. One can recognise an HMA 4 domain in the interval 277 to 343 (STATFIIDGM…AIEAVSPGLY (67 aa)). Cu(+) is bound by residues Cys288 and Cys291. Position 327 is a phosphothreonine (Thr327). Ser339, Ser353, Ser357, and Ser362 each carry phosphoserine. 3 consecutive HMA domains span residues 377–443 (QETV…FDAT), 488–554 (SKCY…FGAT), and 564–630 (GVLE…FEAS). The Cu(+) site is built by Cys388, Cys391, Cys499, Cys502, Cys575, and Cys578. The chain crosses the membrane as a helical span at residues 654–675 (FLVSLFFCIPVMGLMIYMMVMD). At 676-714 (HHFATLHHNQNMSKEEMINLHSSMFLERQILPGLSVMNL) the chain is on the extracellular side. N-linked (GlcNAc...) asparagine glycosylation is present at Asn686. Residues 715–734 (LSFLLCVPVQFFGGWYFYIQ) traverse the membrane as a helical segment. Topologically, residues 735–741 (AYKALKH) are cytoplasmic. A helical membrane pass occupies residues 742-762 (KTANMDVLIVLATTIAFAYSL). Topologically, residues 763–781 (IILLVAMYERAKVNPITFF) are extracellular. Residues 782 to 802 (DTPPMLFVFIALGRWLEHIAK) form a helical membrane-spanning segment. Topologically, residues 803–936 (GKTSEALAKL…KAPIQQFADK (134 aa)) are cytoplasmic. The chain crosses the membrane as a helical span at residues 937 to 959 (LSGYFVPFIVFVSIATLLVWIVI). The Extracellular portion of the chain corresponds to 960-989 (GFLNFEIVETYFPGYNRSISRTETIIRFAF). Residue Asn975 is glycosylated (N-linked (GlcNAc...) asparagine). Residues 990-1011 (QASITVLCIACPCSLGLATPTA) traverse the membrane as a helical segment. Topologically, residues 1012 to 1356 (VMVGTGVGAQ…LSRKTVKRIR (345 aa)) are cytoplasmic. Asp1044 acts as the 4-aspartylphosphate intermediate in catalysis. Glu1081 contacts ATP. Thr1212 bears the Phosphothreonine mark. Positions 1301 and 1305 each coordinate Mg(2+). A helical membrane pass occupies residues 1357–1374 (INFVFALIYNLVGIPIAA). The Extracellular segment spans residues 1375–1385 (GVFMPIGLVLQ). A helical membrane pass occupies residues 1386–1405 (PWMGSAAMAASSVSVVLSSL). Residues 1406–1500 (FLKLYRKPTY…DFREDDDTAL (95 aa)) are Cytoplasmic-facing. Phosphoserine is present on residues Ser1430, Ser1432, Ser1460, Ser1463, and Ser1466. The Endocytosis signal signature appears at 1467–1468 (LL). Phosphoserine occurs at positions 1469, 1473, 1476, and 1486. The PDZD11-binding stretch occupies residues 1486-1500 (SLLVGDFREDDDTAL). The Endocytosis signal signature appears at 1487-1488 (LL).

The protein belongs to the cation transport ATPase (P-type) (TC 3.A.3) family. Type IB subfamily. Monomer. Interacts with PDZD11. Interacts with ATOX1 and COMMD1. Interacts with TYRP1. Directly interacts with SOD3; this interaction is copper-dependent and is required for SOD3 activity. In terms of tissue distribution, widely expressed including in heart, brain, lung, muscle, kidney, pancreas, and to a lesser extent placenta. Expressed in fibroblasts, aortic smooth muscle cells, aortic endothelial cells and umbilical vein endothelial cells (at protein level). Expressed in cerebellum and brain cortex.

It is found in the golgi apparatus. The protein localises to the trans-Golgi network membrane. Its subcellular location is the cell membrane. It localises to the melanosome membrane. The protein resides in the early endosome membrane. It is found in the cell projection. The protein localises to the axon. Its subcellular location is the dendrite. It localises to the postsynaptic density. The protein resides in the cytoplasm. It is found in the cytosol. The protein localises to the endoplasmic reticulum. It catalyses the reaction Cu(+)(in) + ATP + H2O = Cu(+)(out) + ADP + phosphate + H(+). ATP-driven copper (Cu(+)) ion pump that plays an important role in intracellular copper ion homeostasis. Within a catalytic cycle, acquires Cu(+) ion from donor protein on the cytoplasmic side of the membrane and delivers it to acceptor protein on the lumenal side. The transfer of Cu(+) ion across the membrane is coupled to ATP hydrolysis and is associated with a transient phosphorylation that shifts the pump conformation from inward-facing to outward-facing state. Under physiological conditions, at low cytosolic copper concentration, it is localized at the trans-Golgi network (TGN) where it transfers Cu(+) ions to cuproenzymes of the secretory pathway. Upon elevated cytosolic copper concentrations, it relocalizes to the plasma membrane where it is responsible for the export of excess Cu(+) ions. May play a dual role in neuron function and survival by regulating cooper efflux and neuronal transmission at the synapse as well as by supplying Cu(+) ions to enzymes such as PAM, TYR and SOD3. In the melanosomes of pigmented cells, provides copper cofactor to TYR to form an active TYR holoenzyme for melanin biosynthesis. The protein is Copper-transporting ATPase 1 of Homo sapiens (Human).